The following is a 300-amino-acid chain: GTPase Era (300 aa).

In terms of domain architecture, Era-type G spans arginine 8–glutamate 176. Positions glycine 16–serine 23 are G1. GTP is bound at residue glycine 16–serine 23. Residues glutamine 42 to histidine 46 are G2. The interval aspartate 63–glycine 66 is G3. GTP-binding positions include aspartate 63–methionine 67 and asparagine 125–aspartate 128. The G4 stretch occupies residues asparagine 125–aspartate 128. The G5 stretch occupies residues isoleucine 155–alanine 157. A KH type-2 domain is found at valine 199–glycine 283.

It belongs to the TRAFAC class TrmE-Era-EngA-EngB-Septin-like GTPase superfamily. Era GTPase family. Monomer.

It is found in the cytoplasm. It localises to the cell inner membrane. In terms of biological role, an essential GTPase that binds both GDP and GTP, with rapid nucleotide exchange. Plays a role in 16S rRNA processing and 30S ribosomal subunit biogenesis and possibly also in cell cycle regulation and energy metabolism. The polypeptide is GTPase Era (Pseudomonas putida (strain W619)).